A 226-amino-acid chain; its full sequence is Enolase-phosphatase E1 (226 aa).

Belongs to the HAD-like hydrolase superfamily. MasA/MtnC family. As to quaternary structure, monomer. It depends on Mg(2+) as a cofactor.

The catalysed reaction is 5-methylsulfanyl-2,3-dioxopentyl phosphate + H2O = 1,2-dihydroxy-5-(methylsulfanyl)pent-1-en-3-one + phosphate. The protein operates within amino-acid biosynthesis; L-methionine biosynthesis via salvage pathway; L-methionine from S-methyl-5-thio-alpha-D-ribose 1-phosphate: step 3/6. It functions in the pathway amino-acid biosynthesis; L-methionine biosynthesis via salvage pathway; L-methionine from S-methyl-5-thio-alpha-D-ribose 1-phosphate: step 4/6. Functionally, bifunctional enzyme that catalyzes the enolization of 2,3-diketo-5-methylthiopentyl-1-phosphate (DK-MTP-1-P) into the intermediate 2-hydroxy-3-keto-5-methylthiopentenyl-1-phosphate (HK-MTPenyl-1-P), which is then dephosphorylated to form the acireductone 1,2-dihydroxy-3-keto-5-methylthiopentene (DHK-MTPene). The protein is Enolase-phosphatase E1 of Shewanella sp. (strain ANA-3).